The sequence spans 449 residues: Phosphoglucosamine mutase (449 aa).

Serine 102 functions as the Phosphoserine intermediate in the catalytic mechanism. Mg(2+) is bound by residues serine 102, aspartate 243, aspartate 245, and aspartate 247. Serine 102 carries the phosphoserine modification.

Belongs to the phosphohexose mutase family. Mg(2+) is required as a cofactor. Post-translationally, activated by phosphorylation.

It carries out the reaction alpha-D-glucosamine 1-phosphate = D-glucosamine 6-phosphate. In terms of biological role, catalyzes the conversion of glucosamine-6-phosphate to glucosamine-1-phosphate. The chain is Phosphoglucosamine mutase from Maricaulis maris (strain MCS10) (Caulobacter maris).